Reading from the N-terminus, the 244-residue chain is MKYVLDVHTHTVASGHAYTTLLENAKYASEIGLKVLGTTEHGPKMPHAPHIWYFYNYKVLPRKIYGVTMLHGCEVNVVDYKGNLDLPEDIVKDLDIVIASLHEPCVTPGTIEENTAAILNVMDNPYVDIIGHPGNPAYPINAEEVVKKAKEKNILIEINNSSFKTSRIGSVPNCTEIVKLCKKHGVNIILGSDSHVCFTIGNFDKIQEILDSIDMPKELIINTDEKKLLTYLKSKGKLKDLVID.

Zn(2+) is bound by residues histidine 8, histidine 10, histidine 16, histidine 41, glutamate 74, histidine 102, histidine 132, aspartate 193, and histidine 195.

It belongs to the PHP family. It depends on Zn(2+) as a cofactor.

The protein is Probable phosphatase NT01CX_1282 of Clostridium novyi (strain NT).